Consider the following 170-residue polypeptide: MVDTTKNTKLFTSYGVKTSKAITTEVAAKLISKAKRPLFVVGTGVLDPELLDRAVKIAKAKNIPIAATGSSMPGFVDKDVNAKYINLHQLGFYLTDPDWPGLDGNGNYDTIILLGHKKYYINQVLSAVKNFSDVKSISIDRNYIQNATMSFGNLSKADHIAALDEVIDLL.

Belongs to the CdhB family. In terms of assembly, heterotetramer of two alpha and two epsilon subunits. The ACDS complex is made up of alpha, epsilon, beta, gamma and delta subunits with a probable stoichiometry of (alpha(2)epsilon(2))(4)-beta(8)-(gamma(1)delta(1))(8).

Its pathway is one-carbon metabolism; methanogenesis from acetate. In terms of biological role, part of a complex that catalyzes the reversible cleavage of acetyl-CoA, allowing growth on acetate as sole source of carbon and energy. The alpha-epsilon subcomponent functions as a carbon monoxide dehydrogenase. The precise role of the epsilon subunit is unclear; it may have a stabilizing role within the alpha(2)epsilon(2) component and/or be involved in electron transfer to FAD during a potential FAD-mediated CO oxidation. This chain is Acetyl-CoA decarbonylase/synthase complex subunit epsilon 2 (cdhB2), found in Methanosarcina thermophila.